Here is a 429-residue protein sequence, read N- to C-terminus: tRNA-2-methylthio-N(6)-dimethylallyladenosine synthase (429 aa).

An MTTase N-terminal domain is found at 1 to 110 (MKFFIKTYGC…IPEAVELSIK (110 aa)). [4Fe-4S] cluster is bound by residues Cys10, Cys46, Cys75, Cys146, Cys150, and Cys153. The Radical SAM core domain occupies 132–364 (RNSKHHAWIT…NLQKEINKML (233 aa)). The TRAM domain occupies 366 to 427 (ESYLDKTVEV…AGPLYGDIIK (62 aa)).

Belongs to the methylthiotransferase family. MiaB subfamily. As to quaternary structure, monomer. [4Fe-4S] cluster is required as a cofactor.

The protein localises to the cytoplasm. The enzyme catalyses N(6)-dimethylallyladenosine(37) in tRNA + (sulfur carrier)-SH + AH2 + 2 S-adenosyl-L-methionine = 2-methylsulfanyl-N(6)-dimethylallyladenosine(37) in tRNA + (sulfur carrier)-H + 5'-deoxyadenosine + L-methionine + A + S-adenosyl-L-homocysteine + 2 H(+). In terms of biological role, catalyzes the methylthiolation of N6-(dimethylallyl)adenosine (i(6)A), leading to the formation of 2-methylthio-N6-(dimethylallyl)adenosine (ms(2)i(6)A) at position 37 in tRNAs that read codons beginning with uridine. The polypeptide is tRNA-2-methylthio-N(6)-dimethylallyladenosine synthase (Thermosipho africanus (strain TCF52B)).